Consider the following 329-residue polypeptide: Beta-ketoacyl-[acyl-carrier-protein] synthase III (329 aa).

Active-site residues include Cys123 and His256. The ACP-binding stretch occupies residues 257 to 261 (QANIR). Residue Asn286 is part of the active site.

The protein belongs to the thiolase-like superfamily. FabH family. As to quaternary structure, homodimer.

It is found in the cytoplasm. It carries out the reaction malonyl-[ACP] + acetyl-CoA + H(+) = 3-oxobutanoyl-[ACP] + CO2 + CoA. Its pathway is lipid metabolism; fatty acid biosynthesis. Functionally, catalyzes the condensation reaction of fatty acid synthesis by the addition to an acyl acceptor of two carbons from malonyl-ACP. Catalyzes the first condensation reaction which initiates fatty acid synthesis and may therefore play a role in governing the total rate of fatty acid production. Possesses both acetoacetyl-ACP synthase and acetyl transacylase activities. Its substrate specificity determines the biosynthesis of branched-chain and/or straight-chain of fatty acids. This chain is Beta-ketoacyl-[acyl-carrier-protein] synthase III, found in Burkholderia pseudomallei (strain 1710b).